The sequence spans 790 residues: Phenylalanine--tRNA ligase beta subunit (790 aa).

The 110-residue stretch at 40 to 149 folds into the tRNA-binding domain; it reads AEKVSGVVVG…IDAPVGTDIN (110 aa). The B5 domain maps to 402 to 479; sequence NKQIKINLSI…RIYGYSKLPE (78 aa). The Mg(2+) site is built by Asp-457, Asp-463, Glu-466, and Glu-467. Positions 698 to 789 constitute an FDX-ACB domain; it reads SKYPSVSRDI…LKTKFNIEQR (92 aa).

The protein belongs to the phenylalanyl-tRNA synthetase beta subunit family. Type 1 subfamily. In terms of assembly, tetramer of two alpha and two beta subunits. The cofactor is Mg(2+).

Its subcellular location is the cytoplasm. It carries out the reaction tRNA(Phe) + L-phenylalanine + ATP = L-phenylalanyl-tRNA(Phe) + AMP + diphosphate + H(+). In Francisella tularensis subsp. tularensis (strain SCHU S4 / Schu 4), this protein is Phenylalanine--tRNA ligase beta subunit.